The primary structure comprises 346 residues: Dihydroorotase (346 aa).

Zn(2+) contacts are provided by His13 and His15. Substrate is bound by residues 15 to 17 and Asn41; that span reads HLR. Positions 99, 136, and 174 each coordinate Zn(2+). Lys99 is modified (N6-carboxylysine). Residue His136 participates in substrate binding. Substrate is bound at residue Leu219. Residue Asp247 coordinates Zn(2+). Asp247 is an active-site residue. The substrate site is built by His251 and Ala263.

The protein belongs to the metallo-dependent hydrolases superfamily. DHOase family. Class II DHOase subfamily. As to quaternary structure, homodimer. Requires Zn(2+) as cofactor.

It catalyses the reaction (S)-dihydroorotate + H2O = N-carbamoyl-L-aspartate + H(+). The protein operates within pyrimidine metabolism; UMP biosynthesis via de novo pathway; (S)-dihydroorotate from bicarbonate: step 3/3. Functionally, catalyzes the reversible cyclization of carbamoyl aspartate to dihydroorotate. This Chelativorans sp. (strain BNC1) protein is Dihydroorotase.